The following is a 428-amino-acid chain: 3-oxo-tetronate kinase (428 aa).

ATP contacts are provided by residues Ser-267, Gly-365–Thr-368, and Gly-409.

This sequence belongs to the four-carbon acid sugar kinase family.

It catalyses the reaction 3-dehydro-L-erythronate + ATP = 3-dehydro-4-O-phospho-L-erythronate + ADP + H(+). The enzyme catalyses 3-dehydro-D-erythronate + ATP = 3-dehydro-4-O-phospho-D-erythronate + ADP + H(+). Functionally, catalyzes the ATP-dependent phosphorylation of 3-oxo-tetronate to 3-oxo-tetronate 4-phosphate. This Burkholderia multivorans (strain ATCC 17616 / 249) protein is 3-oxo-tetronate kinase.